A 325-amino-acid polypeptide reads, in one-letter code: Glutarate 2-hydroxylase (325 aa).

Residues H160, D162, and H292 each coordinate Fe cation.

This sequence belongs to the glutarate hydroxylase family. Homotetramer. Fe(2+) serves as cofactor.

It catalyses the reaction glutarate + 2-oxoglutarate + O2 = (S)-2-hydroxyglutarate + succinate + CO2. The protein operates within amino-acid degradation. Its function is as follows. Acts as an alpha-ketoglutarate-dependent dioxygenase catalyzing hydroxylation of glutarate (GA) to L-2-hydroxyglutarate (L2HG). Functions in a L-lysine degradation pathway that proceeds via cadaverine, glutarate and L-2-hydroxyglutarate. The chain is Glutarate 2-hydroxylase from Escherichia coli (strain UTI89 / UPEC).